A 209-amino-acid polypeptide reads, in one-letter code: Imidazole glycerol phosphate synthase subunit HisH (209 aa).

The Glutamine amidotransferase type-1 domain maps to 1 to 205; it reads MIAIIDYGMG…KGVVESWKSS (205 aa). Cys-79 functions as the Nucleophile in the catalytic mechanism. Active-site residues include His-180 and Glu-182.

As to quaternary structure, heterodimer of HisH and HisF.

It is found in the cytoplasm. It carries out the reaction 5-[(5-phospho-1-deoxy-D-ribulos-1-ylimino)methylamino]-1-(5-phospho-beta-D-ribosyl)imidazole-4-carboxamide + L-glutamine = D-erythro-1-(imidazol-4-yl)glycerol 3-phosphate + 5-amino-1-(5-phospho-beta-D-ribosyl)imidazole-4-carboxamide + L-glutamate + H(+). The enzyme catalyses L-glutamine + H2O = L-glutamate + NH4(+). It functions in the pathway amino-acid biosynthesis; L-histidine biosynthesis; L-histidine from 5-phospho-alpha-D-ribose 1-diphosphate: step 5/9. Its function is as follows. IGPS catalyzes the conversion of PRFAR and glutamine to IGP, AICAR and glutamate. The HisH subunit catalyzes the hydrolysis of glutamine to glutamate and ammonia as part of the synthesis of IGP and AICAR. The resulting ammonia molecule is channeled to the active site of HisF. This is Imidazole glycerol phosphate synthase subunit HisH from Bacillus cereus (strain ATCC 10987 / NRS 248).